The chain runs to 218 residues: 3,4-dihydroxy-2-butanone 4-phosphate synthase (218 aa).

D-ribulose 5-phosphate is bound by residues 38 to 39, Asp43, 151 to 155, and Glu175; these read RE and RRGHT. Glu39 is a Mg(2+) binding site. His154 provides a ligand contact to Mg(2+).

The protein belongs to the DHBP synthase family. In terms of assembly, homodimer. It depends on Mg(2+) as a cofactor. Mn(2+) serves as cofactor.

It carries out the reaction D-ribulose 5-phosphate = (2S)-2-hydroxy-3-oxobutyl phosphate + formate + H(+). It participates in cofactor biosynthesis; riboflavin biosynthesis; 2-hydroxy-3-oxobutyl phosphate from D-ribulose 5-phosphate: step 1/1. Its function is as follows. Catalyzes the conversion of D-ribulose 5-phosphate to formate and 3,4-dihydroxy-2-butanone 4-phosphate. This is 3,4-dihydroxy-2-butanone 4-phosphate synthase from Vibrio cholerae serotype O1 (strain ATCC 39541 / Classical Ogawa 395 / O395).